A 377-amino-acid chain; its full sequence is uncharacterized protein (377 aa).

Transmembrane regions (helical) follow at residues 23 to 43 (LKFI…FIAY) and 251 to 271 (GSFI…SISY).

Its subcellular location is the cell membrane. This is an uncharacterized protein from Methanocaldococcus jannaschii (strain ATCC 43067 / DSM 2661 / JAL-1 / JCM 10045 / NBRC 100440) (Methanococcus jannaschii).